The following is a 357-amino-acid chain: Uroporphyrinogen decarboxylase (357 aa).

Substrate contacts are provided by residues 27–31, aspartate 77, tyrosine 154, serine 209, and histidine 330; that span reads RQAGR.

The protein belongs to the uroporphyrinogen decarboxylase family. In terms of assembly, homodimer.

It localises to the cytoplasm. It catalyses the reaction uroporphyrinogen III + 4 H(+) = coproporphyrinogen III + 4 CO2. It functions in the pathway porphyrin-containing compound metabolism; protoporphyrin-IX biosynthesis; coproporphyrinogen-III from 5-aminolevulinate: step 4/4. Functionally, catalyzes the decarboxylation of four acetate groups of uroporphyrinogen-III to yield coproporphyrinogen-III. This is Uroporphyrinogen decarboxylase from Acinetobacter baumannii (strain AB0057).